Here is a 416-residue protein sequence, read N- to C-terminus: 3-hydroxy-3-methylglutaryl coenzyme A reductase AN1593 (416 aa).

Glutamate 103 functions as the Charge relay system in the catalytic mechanism. Asparagine 167 is a glycosylation site (N-linked (GlcNAc...) asparagine). The Charge relay system role is filled by lysine 236. A glycan (N-linked (GlcNAc...) asparagine) is linked at asparagine 277. Residue aspartate 312 is the Charge relay system of the active site. Residues 380 to 400 (LALLVAAGVLAGELSLCSALS) traverse the membrane as a helical segment. Histidine 408 acts as the Proton donor in catalysis.

The protein belongs to the HMG-CoA reductase family.

It is found in the membrane. It carries out the reaction (R)-mevalonate + 2 NADP(+) + CoA = (3S)-3-hydroxy-3-methylglutaryl-CoA + 2 NADPH + 2 H(+). It participates in metabolic intermediate biosynthesis; (R)-mevalonate biosynthesis; (R)-mevalonate from acetyl-CoA: step 3/3. Its function is as follows. 3-hydroxy-3-methylglutaryl coenzyme A reductase; part of the gene cluster that mediates the biosynthesis of the diterpene ent-pimara-8(14),15-diene (PD). Within the cluster, the HMG-CoA reductase AN1593 functions in the mevalonate pathway, which produces isoprenoid precursors. The geranylgeranyl pyrophosphate (GGPP) synthase AN1592 is needed in the formation of GGPP, the precursor for diterpenes. Lastly, the pimaradiene synthase pbcA performs the 2 cyclization steps that convert GGPP to ent-pimara-8(14),15-diene. The putative roles of the remaining cluster enzymes in ent-pimara-8(14),15-diene biosynthesis is unclear. The cytochrome P450 monooxygenase AN1598, the glutathione S-transferase AN1595, the oxidoreductases AN1596 and AN1597 probably function as decorative enzymes. It is possible that in biological conditions the compound is oxidized to ent-pimara-8(14),15-dien-19-oic acid, which is a bioactive diterpene compound predominant in many plant extracts. This chain is 3-hydroxy-3-methylglutaryl coenzyme A reductase AN1593, found in Emericella nidulans (strain FGSC A4 / ATCC 38163 / CBS 112.46 / NRRL 194 / M139) (Aspergillus nidulans).